The following is a 61-amino-acid chain: Alpha-conotoxin-like PnMGMR-02 (61 aa).

Positions 1–21 are cleaved as a signal peptide; the sequence is MGMRMMFTVFLLVVLATTVVS. Positions 22–44 are excised as a propeptide; that stretch reads FTSDRASDGGNAAASDLIALTIK. Cystine bridges form between cysteine 46/cysteine 52 and cysteine 47/cysteine 60. The tract at residues 48–50 is ser-Xaa-Pro motif, crucial for potent interaction with nAChR; sequence SRP. Residue cysteine 60 is modified to Cysteine amide.

The protein belongs to the conotoxin A superfamily. As to expression, expressed by the venom duct.

It is found in the secreted. In terms of biological role, alpha-conotoxins act on postsynaptic membranes, they bind to the nicotinic acetylcholine receptors (nAChR) and thus inhibit them. This toxin blocks mammalian nAChRs (alpha-7 &gt; alpha-3/beta-2). In Conus pennaceus (Feathered cone), this protein is Alpha-conotoxin-like PnMGMR-02.